The following is a 361-amino-acid chain: Chorismate synthase (361 aa).

NADP(+)-binding residues include arginine 48 and arginine 54. Residues 125–127, 238–239, glycine 278, 293–297, and arginine 319 contribute to the FMN site; these read RSS, NA, and KPTSS.

It belongs to the chorismate synthase family. As to quaternary structure, homotetramer. Requires FMNH2 as cofactor.

The catalysed reaction is 5-O-(1-carboxyvinyl)-3-phosphoshikimate = chorismate + phosphate. The protein operates within metabolic intermediate biosynthesis; chorismate biosynthesis; chorismate from D-erythrose 4-phosphate and phosphoenolpyruvate: step 7/7. Its function is as follows. Catalyzes the anti-1,4-elimination of the C-3 phosphate and the C-6 proR hydrogen from 5-enolpyruvylshikimate-3-phosphate (EPSP) to yield chorismate, which is the branch point compound that serves as the starting substrate for the three terminal pathways of aromatic amino acid biosynthesis. This reaction introduces a second double bond into the aromatic ring system. The protein is Chorismate synthase of Proteus mirabilis (strain HI4320).